The following is a 354-amino-acid chain: Trans-L-3-hydroxyproline dehydratase (354 aa).

Cys104 serves as the catalytic Proton acceptor. Residues 105–106 (GH), Asp269, and 274–275 (GS) each bind substrate.

It belongs to the proline racemase family. As to quaternary structure, homodimer.

The enzyme catalyses trans-3-hydroxy-L-proline = 1-pyrroline-2-carboxylate + H2O. Its function is as follows. Catalyzes the dehydration of trans-3-hydroxy-L-proline to Delta(1)-pyrroline-2-carboxylate (Pyr2C). This chain is Trans-L-3-hydroxyproline dehydratase (L3HYPDH), found in Bos taurus (Bovine).